Reading from the N-terminus, the 203-residue chain is Endo-type membrane-bound lytic murein transglycosylase A (203 aa).

The first 15 residues, 1–15, serve as a signal peptide directing secretion; that stretch reads MKLRWFAFLIVLLAG. Cys-16 is lipidated: N-palmitoyl cysteine. A lipid anchor (S-diacylglycerol cysteine) is attached at Cys-16.

This sequence belongs to the transglycosylase Slt family.

It is found in the cell outer membrane. The catalysed reaction is Endolytic cleavage of the (1-&gt;4)-beta-glycosidic linkage between N-acetylmuramic acid (MurNAc) and N-acetylglucosamine (GlcNAc) residues in peptidoglycan with concomitant formation of a 1,6-anhydrobond in the MurNAc residue.. Murein-degrading enzyme. May play a role in recycling of muropeptides during cell elongation and/or cell division. Preferentially cleaves at a distance of more than two disaccharide units from the ends of the glycan chain. In Escherichia coli (strain K12 / MC4100 / BW2952), this protein is Endo-type membrane-bound lytic murein transglycosylase A.